Consider the following 249-residue polypeptide: Probable transcriptional regulatory protein AB57_1731 (249 aa).

Belongs to the TACO1 family.

The protein resides in the cytoplasm. The polypeptide is Probable transcriptional regulatory protein AB57_1731 (Acinetobacter baumannii (strain AB0057)).